Here is a 295-residue protein sequence, read N- to C-terminus: Large ribosomal subunit protein uL2 (295 aa).

The tract at residues 243 to 295 (WRPHTRGTAMNPVDHPHGGGEGRTRGKHPESPWDGRRRDTRREGVRSTPISLS) is disordered. Over residues 256-287 (DHPHGGGEGRTRGKHPESPWDGRRRDTRREGV) the composition is skewed to basic and acidic residues.

The protein belongs to the universal ribosomal protein uL2 family. Part of the 50S ribosomal subunit. Forms a bridge to the 30S subunit in the 70S ribosome.

In terms of biological role, one of the primary rRNA binding proteins. Required for association of the 30S and 50S subunits to form the 70S ribosome, for tRNA binding and peptide bond formation. It has been suggested to have peptidyltransferase activity; this is somewhat controversial. Makes several contacts with the 16S rRNA in the 70S ribosome. The chain is Large ribosomal subunit protein uL2 from Aquifex pyrophilus.